We begin with the raw amino-acid sequence, 111 residues long: C-type lectin lectoxin-Enh2 (111 aa).

A signal peptide spans 1 to 23; the sequence is MGQFTVVSLGLLAMFLSLSGAKG. An intrachain disulfide couples cysteine 26 to cysteine 37. One can recognise a C-type lectin domain in the interval 33 to 108; it reads RNGVCNKLFP…CASLHPFICQ (76 aa). Positions 72-74 match the Mannose-binding motif; the sequence is EPN. Residues glutamate 80, asparagine 95, and aspartate 96 each coordinate Ca(2+). Cysteine 82 and cysteine 99 are oxidised to a cystine.

It belongs to the true venom lectin family. As to expression, expressed by the venom gland.

The protein localises to the secreted. Mannose-binding lectin which recognizes specific carbohydrate structures and agglutinates a variety of animal cells by binding to cell-surface glycoproteins and glycolipids. May be a calcium-dependent lectin. The protein is C-type lectin lectoxin-Enh2 of Pseudoferania polylepis (Macleay's water snake).